A 58-amino-acid polypeptide reads, in one-letter code: Small ribosomal subunit protein bS21 (58 aa).

Positions 25 to 58 (SKSGTLQEYRKREHYEKPSVKRKKKSEAARKRKF) are disordered. Basic and acidic residues predominate over residues 32 to 43 (EYRKREHYEKPS). Residues 44–58 (VKRKKKSEAARKRKF) are compositionally biased toward basic residues.

The protein belongs to the bacterial ribosomal protein bS21 family.

The protein is Small ribosomal subunit protein bS21 of Oceanobacillus iheyensis (strain DSM 14371 / CIP 107618 / JCM 11309 / KCTC 3954 / HTE831).